Consider the following 935-residue polypeptide: MAPAGILNGKVVSAQIRNRLKTQVTQMQEQVPGFTPGLAILQVGDRDDSNLYINVKLKAAQEIGIKATHIKLPRTSTESEVLKYVISLNEDATVHGFIVQLPLDSENSINTEAVINAIAPEKDVDGLTSINAGKLARGDLKDCFIPCTPKGCLELIKETGVQIAGRHAVVVGRSKIVGAPMHDLLLWNNATVTTCHSKTADLDKEVNKGDILVVATGQPEMVKGEWIKPGAVVIDCGINYVPDDTKPNGRKVVGDVAYDEAKEKASFITPVPGGVGPMTVAMLMQSTVESAQRFLKKFKPGKWTIQYNKLNLKTPVPSDIAISRSCKPKLIGNLAREIGLLTEEVELYGETKAKVLLSALDRLKHQPDGKYVVVTGITPTPLGEGKSTTTIGLVQALGAHLHQNVFACVRQPSQGPTFGIKGGAAGGGYSQVIPMEEFNLHLTGDIHAITAANNLVAAAIDARIFHELTQTDKALFNRLVPSVNGVRKFSDIQIRRLRRLGIEKTDPAALTDDEINRFARLDIDPETITWQRVLDTNDRFLRKITIGQAPTEKGHTRTAQFDISVASEIMAVLALTSSLEDMRARLGKMVVASSKKGEPISCEDLGVSGALTVLMKDAIKPNLMQTLEGTPVFVHAGPFANIAHGNSSIIADRIALKLVGPEGFVVTEAGFGADIGMEKFFNIKCRYSGLQPHVVVLVATVRALKMHGGGPTVTAGLPLPKAYTEEDLDLVEKGFSNLRKQIENARMFGVPVVVAMNAFKTDTDTELDLIGRLSREHGAFDAVKCTHWAEGGQGALALAQAVQRASQAPSSFQLLYDLKLSVEDKIRIIAQKIYGADDIELLPEAQNKAEIYTKQGFGNLPICMAKTHLSLSHNPEQKGVPTGFVLPIRDIRASVGAGFLYPLVGTMSTMPGLPTRPCFYDIDLDPETEQVNGLF.

Met1 is subject to N-acetylmethionine. The interval 2-291 is methylenetetrahydrofolate dehydrogenase and methenyltetrahydrofolate cyclohydrolase (D/C) domain; that stretch reads APAGILNGKV…MLMQSTVESA (290 aa). Residues 52 to 56 and 99 to 101 each bind substrate; these read YINVK and VQL. Lys56 is an active-site residue. NADP(+)-binding positions include 172-174 and Ser197; that span reads GRS. 272–276 provides a ligand contact to substrate; sequence PGGVG. The interval 310-935 is formyltetrahydrofolate synthetase domain; the sequence is LNLKTPVPSD…PETEQVNGLF (626 aa). Ser318 bears the Phosphoserine mark. 380–387 contacts ATP; it reads TPLGEGKS. 2 positions are modified to phosphoserine: Ser413 and Ser490.

In the N-terminal section; belongs to the tetrahydrofolate dehydrogenase/cyclohydrolase family. This sequence in the C-terminal section; belongs to the formate--tetrahydrofolate ligase family. Homodimer.

It is found in the cytoplasm. The catalysed reaction is (6R)-5,10-methylene-5,6,7,8-tetrahydrofolate + NADP(+) = (6R)-5,10-methenyltetrahydrofolate + NADPH. It carries out the reaction (6R)-5,10-methenyltetrahydrofolate + H2O = (6R)-10-formyltetrahydrofolate + H(+). It catalyses the reaction (6S)-5,6,7,8-tetrahydrofolate + formate + ATP = (6R)-10-formyltetrahydrofolate + ADP + phosphate. It participates in one-carbon metabolism; tetrahydrofolate interconversion. Functionally, trifunctional enzyme that catalyzes the interconversion of three forms of one-carbon-substituted tetrahydrofolate: (6R)-5,10-methylene-5,6,7,8-tetrahydrofolate, 5,10-methenyltetrahydrofolate and (6S)-10-formyltetrahydrofolate. These derivatives of tetrahydrofolate are differentially required in nucleotide and amino acid biosynthesis, (6S)-10-formyltetrahydrofolate being required for purine biosynthesis while (6R)-5,10-methylene-5,6,7,8-tetrahydrofolate is used for serine and methionine biosynthesis for instance. The chain is C-1-tetrahydrofolate synthase, cytoplasmic (Mthfd1) from Rattus norvegicus (Rat).